Here is a 310-residue protein sequence, read N- to C-terminus: RING-H2 finger protein ATL60 (310 aa).

Residues 24–44 (VLLFSIVSIFTGILFLLLLHL) form a helical membrane-spanning segment. The segment at 120 to 162 (CAVCLSDLVDGDKARVLPRCNHGFHVDCIDMWFQSHSTCPLCR) adopts an RING-type; atypical zinc-finger fold. Disordered stretches follow at residues 170 to 201 (DTTH…QDQS) and 240 to 260 (GNFA…RSQE). Residues 179–201 (LPQNQNFESGHSTNQHNPSQDQS) show a composition bias toward polar residues.

This sequence belongs to the RING-type zinc finger family. ATL subfamily.

The protein localises to the membrane. The enzyme catalyses S-ubiquitinyl-[E2 ubiquitin-conjugating enzyme]-L-cysteine + [acceptor protein]-L-lysine = [E2 ubiquitin-conjugating enzyme]-L-cysteine + N(6)-ubiquitinyl-[acceptor protein]-L-lysine.. It functions in the pathway protein modification; protein ubiquitination. This chain is RING-H2 finger protein ATL60 (ATL60), found in Arabidopsis thaliana (Mouse-ear cress).